A 196-amino-acid chain; its full sequence is 3-isopropylmalate dehydratase small subunit (196 aa).

The protein belongs to the LeuD family. LeuD type 1 subfamily. In terms of assembly, heterodimer of LeuC and LeuD.

The catalysed reaction is (2R,3S)-3-isopropylmalate = (2S)-2-isopropylmalate. Its pathway is amino-acid biosynthesis; L-leucine biosynthesis; L-leucine from 3-methyl-2-oxobutanoate: step 2/4. Catalyzes the isomerization between 2-isopropylmalate and 3-isopropylmalate, via the formation of 2-isopropylmaleate. The protein is 3-isopropylmalate dehydratase small subunit of Herpetosiphon aurantiacus (strain ATCC 23779 / DSM 785 / 114-95).